The chain runs to 233 residues: Protein TIPIN homolog (233 aa).

Over residues 1–14 the composition is skewed to acidic residues; sequence MDEMEDFFENDELD. Disordered regions lie at residues 1–39 and 134–233; these read MDEM…RVVE and GETG…NNDW. Basic and acidic residues-rich tracts occupy residues 163 to 190 and 197 to 216; these read DLFK…KTAE and EEYR…AKEA. A compositionally biased stretch (acidic residues) spans 217–227; the sequence is ADEDALMEDFG.

The protein belongs to the CSM3 family.

The protein resides in the cytoplasm. Its subcellular location is the nucleus. Required for normal progression of S-phase. Important for cell survival after DNA damage or replication stress. The sequence is that of Protein TIPIN homolog from Caenorhabditis elegans.